Reading from the N-terminus, the 230-residue chain is Potassium/proton antiporter CemA (230 aa).

The next 4 membrane-spanning stretches (helical) occupy residues 7–27, 106–126, 145–165, and 181–201; these read LPSL…SSSF, IILH…SFFL, LNDS…VGFH, and FGWA…PVIL.

This sequence belongs to the CemA family.

The protein resides in the plastid. The protein localises to the chloroplast inner membrane. It catalyses the reaction K(+)(in) + H(+)(out) = K(+)(out) + H(+)(in). Functionally, contributes to K(+)/H(+) antiport activity by supporting proton efflux to control proton extrusion and homeostasis in chloroplasts in a light-dependent manner to modulate photosynthesis. Prevents excessive induction of non-photochemical quenching (NPQ) under continuous-light conditions. Indirectly promotes efficient inorganic carbon uptake into chloroplasts. This chain is Potassium/proton antiporter CemA, found in Hordeum vulgare (Barley).